A 64-amino-acid polypeptide reads, in one-letter code: Cytochrome c oxidase subunit 5C (64 aa).

The chain crosses the membrane as a helical span at residues 16–34; that stretch reads VVKELVIGFSLGLVAGGFW.

Belongs to the cytochrome c oxidase subunit 5C family. Sweet potato cytochrome C oxidase consists of at least seven different polypeptides species, subunits I, II, III, IV, Va, Vb, and Vc in order of MW.

The protein resides in the mitochondrion inner membrane. Its function is as follows. This protein is one of the nuclear-coded polypeptide chains of cytochrome c oxidase, the terminal oxidase in mitochondrial electron transport. This Ipomoea batatas (Sweet potato) protein is Cytochrome c oxidase subunit 5C (COX5C).